A 500-amino-acid polypeptide reads, in one-letter code: Glutamate--tRNA ligase (500 aa).

Residues 12–22 carry the 'HIGH' region motif; sequence PSPTGHLHIGN. A 'KMSKS' region motif is present at residues 259–263; the sequence is KLSKR. Lys-262 is a binding site for ATP.

Belongs to the class-I aminoacyl-tRNA synthetase family. Glutamate--tRNA ligase type 1 subfamily. In terms of assembly, monomer.

It is found in the cytoplasm. It carries out the reaction tRNA(Glu) + L-glutamate + ATP = L-glutamyl-tRNA(Glu) + AMP + diphosphate. In terms of biological role, catalyzes the attachment of glutamate to tRNA(Glu) in a two-step reaction: glutamate is first activated by ATP to form Glu-AMP and then transferred to the acceptor end of tRNA(Glu). This is Glutamate--tRNA ligase from Lactobacillus delbrueckii subsp. bulgaricus (strain ATCC BAA-365 / Lb-18).